We begin with the raw amino-acid sequence, 160 residues long: Endoplasmic reticulum transmembrane protein 2 (160 aa).

Residues 1–2 are Lumenal-facing; sequence MG. Residues 3 to 23 form a helical membrane-spanning segment; that stretch reads VYLAVLFSLLVIEMAILFILV. The Cytoplasmic portion of the chain corresponds to 24–45; sequence LPLPQRMRRWLYIRYSIISTNK. A helical membrane pass occupies residues 46 to 66; sequence KFRTYMVGIMIFVGLLFIDSW. Residues 67-103 are Lumenal-facing; it reads KRSQIRVSTYRNQKNPYIINSVTPVDALASRAYNQRN. A helical membrane pass occupies residues 104-124; that stretch reads VYISGFIIYFYICILTVMSIL. Residues 125–160 are Cytoplasmic-facing; the sequence is RRIVEWNDKMKAGDDILKEKLRRKQKYLEELQKKKF. Positions 157–160 match the Di-lysine motif motif; that stretch reads KKKF.

It belongs to the BCAP29/BCAP31 family.

It localises to the endoplasmic reticulum membrane. Its function is as follows. May play a role in anterograde transport of membrane proteins from the endoplasmic reticulum to the Golgi. The sequence is that of Endoplasmic reticulum transmembrane protein 2 (YET2) from Saccharomyces cerevisiae (strain ATCC 204508 / S288c) (Baker's yeast).